Reading from the N-terminus, the 206-residue chain is Ribosomal RNA small subunit methyltransferase G (206 aa).

Residues G71, F76, 122 to 123, and R135 each bind S-adenosyl-L-methionine; that span reads AE.

The protein belongs to the methyltransferase superfamily. RNA methyltransferase RsmG family.

It is found in the cytoplasm. Specifically methylates the N7 position of a guanine in 16S rRNA. This is Ribosomal RNA small subunit methyltransferase G from Bacteroides thetaiotaomicron (strain ATCC 29148 / DSM 2079 / JCM 5827 / CCUG 10774 / NCTC 10582 / VPI-5482 / E50).